Reading from the N-terminus, the 728-residue chain is Catalase-peroxidase 2 (728 aa).

Positions 91–214 form a cross-link, tryptophyl-tyrosyl-methioninium (Trp-Tyr) (with M-240); the sequence is WHAAGTYRTG…LAAVQMGLIY (124 aa). His-92 serves as the catalytic Proton acceptor. Positions 214 to 240 form a cross-link, tryptophyl-tyrosyl-methioninium (Tyr-Met) (with W-91); that stretch reads YVNPEGPNGNPDPAKAAVDIRETFARM. A heme b-binding site is contributed by His-255. The disordered stretch occupies residues 338–362; sequence WKPNGDAGANSIPDPYDPSRRRGPT.

It belongs to the peroxidase family. Peroxidase/catalase subfamily. As to quaternary structure, homodimer or homotetramer. Heme b serves as cofactor. Post-translationally, formation of the three residue Trp-Tyr-Met cross-link is important for the catalase, but not the peroxidase activity of the enzyme.

The enzyme catalyses H2O2 + AH2 = A + 2 H2O. The catalysed reaction is 2 H2O2 = O2 + 2 H2O. Bifunctional enzyme with both catalase and broad-spectrum peroxidase activity. This is Catalase-peroxidase 2 from Cupriavidus pinatubonensis (strain JMP 134 / LMG 1197) (Cupriavidus necator (strain JMP 134)).